Reading from the N-terminus, the 79-residue chain is Sulfur carrier protein TusA (79 aa).

Cysteine 17 (cysteine persulfide intermediate) is an active-site residue.

Belongs to the sulfur carrier protein TusA family.

The protein localises to the cytoplasm. Sulfur carrier protein which probably makes part of a sulfur-relay system. This Haemophilus influenzae (strain 86-028NP) protein is Sulfur carrier protein TusA.